The following is a 250-amino-acid chain: DNA repair protein RecO (250 aa).

It belongs to the RecO family.

Involved in DNA repair and RecF pathway recombination. This chain is DNA repair protein RecO, found in Beijerinckia indica subsp. indica (strain ATCC 9039 / DSM 1715 / NCIMB 8712).